The primary structure comprises 369 residues: Phenylalanine--tRNA ligase alpha subunit (369 aa).

Residue glutamate 270 participates in Mg(2+) binding.

It belongs to the class-II aminoacyl-tRNA synthetase family. Phe-tRNA synthetase alpha subunit type 1 subfamily. In terms of assembly, tetramer of two alpha and two beta subunits. Mg(2+) serves as cofactor.

It localises to the cytoplasm. It carries out the reaction tRNA(Phe) + L-phenylalanine + ATP = L-phenylalanyl-tRNA(Phe) + AMP + diphosphate + H(+). This is Phenylalanine--tRNA ligase alpha subunit from Phenylobacterium zucineum (strain HLK1).